A 464-amino-acid polypeptide reads, in one-letter code: L-2-hydroxyglutarate dehydrogenase, mitochondrial (464 aa).

Residues 1–52 (MWPTLRYVGGVCGLARYCVAGGFLRASGPASGVPGLLCGGGRRSSSTSSFDI) constitute a mitochondrion transit peptide. Lys-105 and Lys-174 each carry N6-acetyllysine.

The protein belongs to the L2HGDH family. Requires FAD as cofactor.

Its subcellular location is the mitochondrion. It catalyses the reaction (S)-2-hydroxyglutarate + A = 2-oxoglutarate + AH2. This is L-2-hydroxyglutarate dehydrogenase, mitochondrial (L2hgdh) from Mus musculus (Mouse).